The following is a 140-amino-acid chain: Nucleoside diphosphate kinase (140 aa).

ATP contacts are provided by Lys-10, Phe-58, Arg-86, Thr-92, Arg-103, and Asn-113. The active-site Pros-phosphohistidine intermediate is the His-116.

Belongs to the NDK family. In terms of assembly, homohexamer. Mg(2+) is required as a cofactor.

Its subcellular location is the cytoplasm. It carries out the reaction a 2'-deoxyribonucleoside 5'-diphosphate + ATP = a 2'-deoxyribonucleoside 5'-triphosphate + ADP. The enzyme catalyses a ribonucleoside 5'-diphosphate + ATP = a ribonucleoside 5'-triphosphate + ADP. Its function is as follows. Major role in the synthesis of nucleoside triphosphates other than ATP. The ATP gamma phosphate is transferred to the NDP beta phosphate via a ping-pong mechanism, using a phosphorylated active-site intermediate. The protein is Nucleoside diphosphate kinase of Methanocaldococcus jannaschii (strain ATCC 43067 / DSM 2661 / JAL-1 / JCM 10045 / NBRC 100440) (Methanococcus jannaschii).